The primary structure comprises 297 residues: Acetylglutamate kinase (297 aa).

Substrate-binding positions include 72–73 (GG), Arg-94, and Asn-187.

Belongs to the acetylglutamate kinase family. ArgB subfamily.

It localises to the cytoplasm. The catalysed reaction is N-acetyl-L-glutamate + ATP = N-acetyl-L-glutamyl 5-phosphate + ADP. Its pathway is amino-acid biosynthesis; L-arginine biosynthesis; N(2)-acetyl-L-ornithine from L-glutamate: step 2/4. In terms of biological role, catalyzes the ATP-dependent phosphorylation of N-acetyl-L-glutamate. This Synechocystis sp. (strain ATCC 27184 / PCC 6803 / Kazusa) protein is Acetylglutamate kinase.